A 468-amino-acid chain; its full sequence is Midnolin (468 aa).

Residues 31-105 (MSLAIHSTTG…LTLVPTVEAG (75 aa)) form the Ubiquitin-like domain. Disordered stretches follow at residues 182–264 (PSIA…RSRK) and 404–447 (LRRK…LGLD). The span at 185 to 201 (ASPVSSPCRPVSSAARV) shows a compositional bias: low complexity. The span at 202-213 (PPVPTSPSPASP) shows a compositional bias: pro residues. 2 stretches are compositionally biased toward low complexity: residues 237-260 (SPTA…SPAP) and 419-431 (SPSR…DSSS).

Interacts with GCK; the interaction occurs preferentially at low glucose levels. Interacts with the proteasome.

The protein resides in the nucleus. It localises to the nucleolus. Its subcellular location is the cytoplasm. It is found in the cytosol. Functionally, facilitates the ubiquitin-independent proteasomal degradation of stimulus-induced transcription factors such as FOSB, EGR1, NR4A1, and IRF4 to the proteasome for degradation. Promotes also the degradation of other substrates such as CBX4. Plays a role in inhibiting the activity of glucokinase GCK and both glucose-induced and basal insulin secretion. The chain is Midnolin (MIDN) from Homo sapiens (Human).